The sequence spans 361 residues: Probable lipid desaturase ADS3.2, chloroplastic (361 aa).

The transit peptide at methionine 1–valine 57 directs the protein to the chloroplast. Helical transmembrane passes span leucine 99–tryptophan 118 and tryptophan 122–tyrosine 139. The Histidine box-1 motif lies at histidine 140–histidine 145. The short motif at histidine 177 to histidine 181 is the Histidine box-2 element. The chain crosses the membrane as a helical span at residues phenylalanine 246–alanine 266. The Histidine box-3 signature appears at histidine 309–histidine 313.

The protein belongs to the fatty acid desaturase type 1 family. Requires Fe(2+) as cofactor.

The protein resides in the plastid. It localises to the chloroplast membrane. It participates in lipid metabolism; polyunsaturated fatty acid biosynthesis. This is Probable lipid desaturase ADS3.2, chloroplastic from Arabidopsis thaliana (Mouse-ear cress).